We begin with the raw amino-acid sequence, 327 residues long: Putative gluconeogenesis factor (327 aa).

Belongs to the gluconeogenesis factor family.

The protein resides in the cytoplasm. Required for morphogenesis under gluconeogenic growth conditions. This chain is Putative gluconeogenesis factor (yjiF), found in Lactococcus lactis subsp. lactis (strain IL1403) (Streptococcus lactis).